A 123-amino-acid chain; its full sequence is Large ribosomal subunit protein bL12 (123 aa).

This sequence belongs to the bacterial ribosomal protein bL12 family. In terms of assembly, homodimer. Part of the ribosomal stalk of the 50S ribosomal subunit. Forms a multimeric L10(L12)X complex, where L10 forms an elongated spine to which 2 to 4 L12 dimers bind in a sequential fashion. Binds GTP-bound translation factors.

Its function is as follows. Forms part of the ribosomal stalk which helps the ribosome interact with GTP-bound translation factors. Is thus essential for accurate translation. This is Large ribosomal subunit protein bL12 from Psychrobacter arcticus (strain DSM 17307 / VKM B-2377 / 273-4).